A 207-amino-acid polypeptide reads, in one-letter code: Keratin-associated protein 27-1 (207 aa).

Positions 184–207 are disordered; sequence QLLESSPGVEPTCCVTGGSQLPSK.

The protein belongs to the PMG family. In terms of assembly, interacts with hair keratins.

Its function is as follows. In the hair cortex, hair keratin intermediate filaments are embedded in an interfilamentous matrix, consisting of hair keratin-associated proteins (KRTAP), which are essential for the formation of a rigid and resistant hair shaft through their extensive disulfide bond cross-linking with abundant cysteine residues of hair keratins. The matrix proteins include the high-sulfur and high-glycine-tyrosine keratins. The protein is Keratin-associated protein 27-1 (KRTAP27-1) of Homo sapiens (Human).